The following is a 465-amino-acid chain: Serine/threonine-protein kinase 38 (465 aa).

Ala2 is subject to N-acetylalanine. The interaction with S100B stretch occupies residues Lys62–Glu87. Thr74 is modified (phosphothreonine). One can recognise a Protein kinase domain in the interval Phe89–Phe382. ATP contacts are provided by residues Ile95–Val103 and Lys118. Asp212 functions as the Proton acceptor in the catalytic mechanism. Ser264 bears the Phosphoserine mark. Ser281 is modified (phosphoserine; by autocatalysis). A UFM1-interacting motif (UFIM) motif is present at residues Trp306–Ile311. Residues Glu383 to Gly455 form the AGC-kinase C-terminal domain. The residue at position 444 (Thr444) is a Phosphothreonine; by STK24/MST3.

The protein belongs to the protein kinase superfamily. AGC Ser/Thr protein kinase family. Homodimeric S100B binds two molecules of STK38. Interacts with MOB1 and MOB2. Interacts with MAP3K1 and MAP3K2 (via the kinase domain). Forms a tripartite complex with MOBKL1B and STK3/MST2. Interacts with MICAL1; leading to inhibit the protein kinase activity by antagonizing activation by MST1/STK4. It depends on Mg(2+) as a cofactor. Post-translationally, ISGylated. In terms of processing, phosphorylated by STK3/MST2 and this is enhanced by MOBKL1B.

It is found in the nucleus. It localises to the cytoplasm. The protein localises to the chromosome. The catalysed reaction is L-seryl-[protein] + ATP = O-phospho-L-seryl-[protein] + ADP + H(+). It carries out the reaction L-threonyl-[protein] + ATP = O-phospho-L-threonyl-[protein] + ADP + H(+). Activated by binding of S100B which releases autoinhibitory N-lobe interactions, enabling ATP to bind and the autophosphorylation of Ser-281. Thr-444 then undergoes calcium-dependent phosphorylation by STK24/MST3. Interactions between phosphorylated Thr-444 and the N-lobe promote additional structural changes that complete the activation of the kinase. Autoinhibition is also released by the binding of MOB1/MOBKL1A and MOB2/HCCA2 to the N-terminal of STK38. In terms of biological role, serine/threonine-protein kinase that acts as a negative regulator of MAP3K1/2 signaling. Converts MAP3K2 from its phosphorylated form to its non-phosphorylated form and inhibits autophosphorylation of MAP3K2. Acts as an ufmylation 'reader' in a kinase-independent manner: specifically recognizes and binds mono-ufmylated histone H4 in response to DNA damage, promoting the recruitment of SUV39H1 to the double-strand breaks, resulting in ATM activation. This Bos taurus (Bovine) protein is Serine/threonine-protein kinase 38 (STK38).